The primary structure comprises 160 residues: UPF0262 protein BSUIS_A0274 (160 aa).

This sequence belongs to the UPF0262 family.

This Brucella suis (strain ATCC 23445 / NCTC 10510) protein is UPF0262 protein BSUIS_A0274.